Consider the following 200-residue polypeptide: Small ribosomal subunit protein uS4 (200 aa).

Positions 22-42 (TGKELEKRPYAPGPHGPGQRK) are disordered. The S4 RNA-binding domain maps to 92–152 (SRLDNIVYRL…EKSQNLSVVK (61 aa)).

Belongs to the universal ribosomal protein uS4 family. In terms of assembly, part of the 30S ribosomal subunit. Contacts protein S5. The interaction surface between S4 and S5 is involved in control of translational fidelity.

In terms of biological role, one of the primary rRNA binding proteins, it binds directly to 16S rRNA where it nucleates assembly of the body of the 30S subunit. With S5 and S12 plays an important role in translational accuracy. The protein is Small ribosomal subunit protein uS4 of Bacillus licheniformis (strain ATCC 14580 / DSM 13 / JCM 2505 / CCUG 7422 / NBRC 12200 / NCIMB 9375 / NCTC 10341 / NRRL NRS-1264 / Gibson 46).